The primary structure comprises 159 residues: Small ribosomal subunit protein bS6 (159 aa).

Residues Sec-46 and Sec-52 are each a non-standard amino acid (selenocysteine).

It belongs to the bacterial ribosomal protein bS6 family.

In terms of biological role, binds together with bS18 to 16S ribosomal RNA. The chain is Small ribosomal subunit protein bS6 from Desulfotalea psychrophila (strain LSv54 / DSM 12343).